A 438-amino-acid polypeptide reads, in one-letter code: UDP-N-acetylmuramoylalanine--D-glutamate ligase (438 aa).

112 to 118 (GSNGKST) serves as a coordination point for ATP.

The protein belongs to the MurCDEF family.

Its subcellular location is the cytoplasm. The catalysed reaction is UDP-N-acetyl-alpha-D-muramoyl-L-alanine + D-glutamate + ATP = UDP-N-acetyl-alpha-D-muramoyl-L-alanyl-D-glutamate + ADP + phosphate + H(+). The protein operates within cell wall biogenesis; peptidoglycan biosynthesis. Cell wall formation. Catalyzes the addition of glutamate to the nucleotide precursor UDP-N-acetylmuramoyl-L-alanine (UMA). The protein is UDP-N-acetylmuramoylalanine--D-glutamate ligase of Salmonella paratyphi A (strain ATCC 9150 / SARB42).